We begin with the raw amino-acid sequence, 409 residues long: LL-diaminopimelate aminotransferase (409 aa).

Residues Tyr15 and Gly42 each contribute to the substrate site. Residues Tyr72, 108–109 (SK), Tyr132, Asn187, Tyr218, and 246–248 (SFS) each bind pyridoxal 5'-phosphate. Residues Lys109, Tyr132, and Asn187 each contribute to the substrate site. Position 249 is an N6-(pyridoxal phosphate)lysine (Lys249). Positions 257 and 292 each coordinate pyridoxal 5'-phosphate. Substrate is bound by residues Asn292 and Arg388.

This sequence belongs to the class-I pyridoxal-phosphate-dependent aminotransferase family. LL-diaminopimelate aminotransferase subfamily. As to quaternary structure, homodimer. Pyridoxal 5'-phosphate serves as cofactor.

The enzyme catalyses (2S,6S)-2,6-diaminopimelate + 2-oxoglutarate = (S)-2,3,4,5-tetrahydrodipicolinate + L-glutamate + H2O + H(+). It participates in amino-acid biosynthesis; L-lysine biosynthesis via DAP pathway; LL-2,6-diaminopimelate from (S)-tetrahydrodipicolinate (aminotransferase route): step 1/1. Functionally, involved in the synthesis of meso-diaminopimelate (m-DAP or DL-DAP), required for both lysine and peptidoglycan biosynthesis. Catalyzes the direct conversion of tetrahydrodipicolinate to LL-diaminopimelate. In Heliobacterium modesticaldum (strain ATCC 51547 / Ice1), this protein is LL-diaminopimelate aminotransferase.